A 494-amino-acid chain; its full sequence is Alpha-amylase-related protein (494 aa).

The signal sequence occupies residues 1 to 20; sequence MIKFALALTLCLAGASLSLA. Pyrrolidone carboxylic acid is present on Gln21. Cys48 and Cys104 are disulfide-bonded. Residues Asn118, Gln169, and Asp178 each contribute to the Ca(2+) site. Cys157 and Cys171 are disulfide-bonded. A chloride-binding site is contributed by Arg206. Residue Asp208 is the Nucleophile of the active site. A Ca(2+)-binding site is contributed by His212. Residue Glu245 is the Proton donor of the active site. 2 residues coordinate chloride: Asn308 and Arg343. 3 cysteine pairs are disulfide-bonded: Cys376/Cys382, Cys418/Cys441, and Cys448/Cys460.

Belongs to the glycosyl hydrolase 13 family. As to quaternary structure, monomer. Requires Ca(2+) as cofactor. It depends on chloride as a cofactor.

It localises to the secreted. The catalysed reaction is Endohydrolysis of (1-&gt;4)-alpha-D-glucosidic linkages in polysaccharides containing three or more (1-&gt;4)-alpha-linked D-glucose units.. This is Alpha-amylase-related protein (Amyrel) from Drosophila kikkawai (Fruit fly).